The chain runs to 483 residues: FAD-dependent oxidoreductase oblC (483 aa).

The N-terminal stretch at 1–21 (MRSVTSLVSFSACLLASSVTA) is a signal peptide. Residues asparagine 100, asparagine 137, asparagine 190, and asparagine 240 are each glycosylated (N-linked (GlcNAc...) asparagine).

This sequence belongs to the beta-cyclopiazonate dehydrogenase family. It depends on FAD as a cofactor.

It participates in secondary metabolite biosynthesis; terpenoid biosynthesis. FAD-dependent oxidoreductase; part of the gene cluster that mediates the biosynthesis of the sesterterpenes ophiobolins, fungal phytotoxins with potential anti-cancer activities. The first step of the pathway is performed by the sesterterpene synthase oblA that possesses both prenyl transferase and terpene cyclase activity, converting isopentenyl diphosphate and dimethylallyl diphosphate into geranylfarnesyl diphosphate (GFPP) and further converting GFPP into ophiobolin F, respectively. Other sesterterpenoids (C(25) terpenoids) are found as minor products of oblA. The cytochrome P450 monooxygenase oblB then catalyzes a four-step oxidative transformation of ophiobolin F to yield ophiobolin C. The FAD-dependent oxidoreductase oblC might be involved in a later oxidation step that produces ophiobolin A. This is FAD-dependent oxidoreductase oblC from Cochliobolus heterostrophus (strain C5 / ATCC 48332 / race O) (Southern corn leaf blight fungus).